Consider the following 135-residue polypeptide: Flagellar assembly factor FliW 1 (135 aa).

It belongs to the FliW family. In terms of assembly, interacts with translational regulator CsrA and flagellin(s).

The protein localises to the cytoplasm. Functionally, acts as an anti-CsrA protein, binds CsrA and prevents it from repressing translation of its target genes, one of which is flagellin. Binds to flagellin and participates in the assembly of the flagellum. The sequence is that of Flagellar assembly factor FliW 1 from Helicobacter pylori (strain HPAG1).